Here is a 197-residue protein sequence, read N- to C-terminus: Phosphoheptose isomerase (197 aa).

One can recognise an SIS domain in the interval 34–196 (MVHCLLGGNK…DRTLFPQDEQ (163 aa)). A substrate-binding site is contributed by 49–51 (NGG). 2 residues coordinate Zn(2+): histidine 58 and glutamate 62. Residues glutamate 62, 91-92 (ND), 117-119 (STS), serine 122, and glutamine 172 each bind substrate. 2 residues coordinate Zn(2+): glutamine 172 and histidine 180.

It belongs to the SIS family. GmhA subfamily. Homotetramer. Zn(2+) serves as cofactor.

The protein localises to the cytoplasm. It carries out the reaction 2 D-sedoheptulose 7-phosphate = D-glycero-alpha-D-manno-heptose 7-phosphate + D-glycero-beta-D-manno-heptose 7-phosphate. The protein operates within carbohydrate biosynthesis; D-glycero-D-manno-heptose 7-phosphate biosynthesis; D-glycero-alpha-D-manno-heptose 7-phosphate and D-glycero-beta-D-manno-heptose 7-phosphate from sedoheptulose 7-phosphate: step 1/1. Its function is as follows. Catalyzes the isomerization of sedoheptulose 7-phosphate in D-glycero-D-manno-heptose 7-phosphate. This chain is Phosphoheptose isomerase, found in Shewanella baltica (strain OS223).